A 1578-amino-acid polypeptide reads, in one-letter code: Pentafunctional AROM polypeptide (1578 aa).

The 3-dehydroquinate synthase stretch occupies residues 1 to 393; that stretch reads MSVELAKVSI…YGTSAHVVSD (393 aa). Residues 44–46, 79–82, 110–112, and Asp115 contribute to the NAD(+) site; these read DTN, EAHK, and GGV. Position 126 (Arg126) interacts with 7-phospho-2-dehydro-3-deoxy-D-arabino-heptonate. An NAD(+)-binding site is contributed by 135-136; sequence TS. Residues Asp142 and Lys148 each coordinate 7-phospho-2-dehydro-3-deoxy-D-arabino-heptonate. Lys157 lines the NAD(+) pocket. Residue Asn158 coordinates 7-phospho-2-dehydro-3-deoxy-D-arabino-heptonate. Residues 175 to 178 and Asn186 contribute to the NAD(+) site; that span reads WLET. Glu190 is a Zn(2+) binding site. 7-phospho-2-dehydro-3-deoxy-D-arabino-heptonate contacts are provided by residues 190–193 and Lys259; that span reads EVIK. The active-site Proton acceptor; for 3-dehydroquinate synthase activity is Glu269. 7-phospho-2-dehydro-3-deoxy-D-arabino-heptonate is bound by residues 273-277 and His280; that span reads RNLLN. His280 lines the Zn(2+) pocket. His284 serves as the catalytic Proton acceptor; for 3-dehydroquinate synthase activity. Positions 296 and 365 each coordinate 7-phospho-2-dehydro-3-deoxy-D-arabino-heptonate. Zn(2+) is bound at residue His296. Residues 406-863 are EPSP synthase; sequence VHPFNNIPEG…WDVLHSQLGA (458 aa). The active-site For EPSP synthase activity is Cys845. The shikimate kinase stretch occupies residues 882-1071; sequence VVIIGMRAAG…VPSRRSAFVC (190 aa). 886-893 is a binding site for ATP; that stretch reads GMRAAGKS. The tract at residues 1072–1284 is 3-dehydroquinase; sequence LTFEDLSDHL…AAPGQLTLAE (213 aa). The active-site Proton acceptor; for 3-dehydroquinate dehydratase activity is His1189. Lys1218 (schiff-base intermediate with substrate; for 3-dehydroquinate dehydratase activity) is an active-site residue. The interval 1297-1578 is shikimate dehydrogenase; it reads AKKFFVIGSP…KAIFDAVTQE (282 aa).

In the N-terminal section; belongs to the sugar phosphate cyclases superfamily. Dehydroquinate synthase family. This sequence in the 2nd section; belongs to the EPSP synthase family. The protein in the 3rd section; belongs to the shikimate kinase family. It in the 4th section; belongs to the type-I 3-dehydroquinase family. In the C-terminal section; belongs to the shikimate dehydrogenase family. As to quaternary structure, homodimer. Requires Zn(2+) as cofactor.

The protein localises to the cytoplasm. The catalysed reaction is 7-phospho-2-dehydro-3-deoxy-D-arabino-heptonate = 3-dehydroquinate + phosphate. It carries out the reaction 3-dehydroquinate = 3-dehydroshikimate + H2O. It catalyses the reaction shikimate + NADP(+) = 3-dehydroshikimate + NADPH + H(+). The enzyme catalyses shikimate + ATP = 3-phosphoshikimate + ADP + H(+). The catalysed reaction is 3-phosphoshikimate + phosphoenolpyruvate = 5-O-(1-carboxyvinyl)-3-phosphoshikimate + phosphate. The protein operates within metabolic intermediate biosynthesis; chorismate biosynthesis; chorismate from D-erythrose 4-phosphate and phosphoenolpyruvate: step 2/7. It functions in the pathway metabolic intermediate biosynthesis; chorismate biosynthesis; chorismate from D-erythrose 4-phosphate and phosphoenolpyruvate: step 3/7. Its pathway is metabolic intermediate biosynthesis; chorismate biosynthesis; chorismate from D-erythrose 4-phosphate and phosphoenolpyruvate: step 4/7. It participates in metabolic intermediate biosynthesis; chorismate biosynthesis; chorismate from D-erythrose 4-phosphate and phosphoenolpyruvate: step 5/7. The protein operates within metabolic intermediate biosynthesis; chorismate biosynthesis; chorismate from D-erythrose 4-phosphate and phosphoenolpyruvate: step 6/7. Its function is as follows. The AROM polypeptide catalyzes 5 consecutive enzymatic reactions in prechorismate polyaromatic amino acid biosynthesis. This Kluyveromyces lactis (strain ATCC 8585 / CBS 2359 / DSM 70799 / NBRC 1267 / NRRL Y-1140 / WM37) (Yeast) protein is Pentafunctional AROM polypeptide.